Consider the following 250-residue polypeptide: Small ribosomal subunit protein uS2 (250 aa).

Belongs to the universal ribosomal protein uS2 family.

The polypeptide is Small ribosomal subunit protein uS2 (Teredinibacter turnerae (strain ATCC 39867 / T7901)).